Here is a 352-residue protein sequence, read N- to C-terminus: Carbohydrate sulfotransferase 11 (352 aa).

Residues 1–16 (MKQTILDLMRMSRICR) are Cytoplasmic-facing. The chain crosses the membrane as a helical; Signal-anchor for type II membrane protein span at residues 17–37 (MVLATCLGSFILVIFYFQSMF). The Lumenal portion of the chain corresponds to 38-352 (QPVMRRNPFA…YSIPSYLKLQ (315 aa)). 3'-phosphoadenylyl sulfate-binding positions include 124 to 130 (PKVACTN) and 186 to 194 (REPFERLVS). N205, N223, N321, and N342 each carry an N-linked (GlcNAc...) asparagine glycan.

It belongs to the sulfotransferase 2 family.

Its subcellular location is the golgi apparatus membrane. The enzyme catalyses chondroitin beta-D-glucuronate + n 3'-phosphoadenylyl sulfate = chondroitin 4'-sulfate + n adenosine 3',5'-bisphosphate + n H(+). In terms of biological role, catalyzes the transfer of sulfate to position 4 of the N-acetylgalactosamine (GalNAc) residue of chondroitin. In Danio rerio (Zebrafish), this protein is Carbohydrate sulfotransferase 11 (chst11).